The following is a 93-amino-acid chain: Small ribosomal subunit protein uS19 (93 aa).

It belongs to the universal ribosomal protein uS19 family.

Its function is as follows. Protein S19 forms a complex with S13 that binds strongly to the 16S ribosomal RNA. This chain is Small ribosomal subunit protein uS19, found in Leptospira borgpetersenii serovar Hardjo-bovis (strain JB197).